The sequence spans 118 residues: uncharacterized protein (118 aa).

Transmembrane regions (helical) follow at residues 7-27 and 34-58; these read VIVKCEFFCIFTFIFGCFIIE and VFVACCTIIKMGRCNMCIFITAIIF.

It localises to the membrane. This is an uncharacterized protein from Saccharomyces cerevisiae (strain ATCC 204508 / S288c) (Baker's yeast).